The sequence spans 241 residues: Ribulose-phosphate 3-epimerase 1 (241 aa).

Substrate is bound at residue Ser-21. His-46, Asp-48, and His-79 together coordinate a divalent metal cation. The Proton acceptor role is filled by Asp-48. Substrate-binding positions include His-79, 155 to 158 (GFGG), 192 to 194 (DGG), and 214 to 215 (GS). Residue Asp-192 coordinates a divalent metal cation. Catalysis depends on Asp-192, which acts as the Proton donor.

This sequence belongs to the ribulose-phosphate 3-epimerase family. The cofactor is a divalent metal cation.

The enzyme catalyses D-ribulose 5-phosphate = D-xylulose 5-phosphate. It functions in the pathway carbohydrate degradation. Its function is as follows. Catalyzes the reversible epimerization of D-ribulose 5-phosphate to D-xylulose 5-phosphate. The chain is Ribulose-phosphate 3-epimerase 1 from Cupriavidus necator (strain ATCC 17699 / DSM 428 / KCTC 22496 / NCIMB 10442 / H16 / Stanier 337) (Ralstonia eutropha).